Consider the following 302-residue polypeptide: tRNA dimethylallyltransferase (302 aa).

8–15 (GSSGSGKS) contacts ATP. 10 to 15 (SGSGKS) contributes to the substrate binding site. Residues 33-36 (DSLS) are interaction with substrate tRNA.

The protein belongs to the IPP transferase family. As to quaternary structure, monomer. Requires Mg(2+) as cofactor.

It catalyses the reaction adenosine(37) in tRNA + dimethylallyl diphosphate = N(6)-dimethylallyladenosine(37) in tRNA + diphosphate. Catalyzes the transfer of a dimethylallyl group onto the adenine at position 37 in tRNAs that read codons beginning with uridine, leading to the formation of N6-(dimethylallyl)adenosine (i(6)A). The protein is tRNA dimethylallyltransferase of Helicobacter hepaticus (strain ATCC 51449 / 3B1).